Consider the following 266-residue polypeptide: Small ribosomal subunit protein eS1 (266 aa).

The tract at residues 237 to 266 (DGGSKTGEVGETGSKVDRPEGYEPPVQETV) is disordered.

Belongs to the eukaryotic ribosomal protein eS1 family. Component of the small ribosomal subunit. Mature ribosomes consist of a small (40S) and a large (60S) subunit. The 40S subunit contains about 33 different proteins and 1 molecule of RNA (18S). The 60S subunit contains about 49 different proteins and 3 molecules of RNA (28S, 5.8S and 5S).

It is found in the cytoplasm. In Lysiphlebus testaceipes (Greenbugs aphid parastoid), this protein is Small ribosomal subunit protein eS1.